A 142-amino-acid polypeptide reads, in one-letter code: Movement protein (142 aa).

The segment at 1–142 (MDLPEDQARF…LDRSESLSRY (142 aa)) is disordered. Composition is skewed to polar residues over residues 9-22 (RFTN…TSME) and 33-43 (LYQSASRSQMA). Positions 50 to 62 (SIISRTSSWRTSP) are enriched in low complexity. Composition is skewed to polar residues over residues 74 to 95 (MNSI…SASP) and 113 to 124 (TTLQRTNSGFST). The segment covering 125 to 142 (KETEMPRLLDRSESLSRY) has biased composition (basic and acidic residues).

The protein belongs to the luteoviruses movement protein family.

Its function is as follows. Transports viral genome to neighboring plant cells directly through plasmosdesmata, without any budding. The movement protein allows efficient cell to cell propagation, by bypassing the host cell wall barrier. In Cicer arietinum (Chickpea), this protein is Movement protein.